Consider the following 72-residue polypeptide: MTLWVGILVGVVALLIGVALGFFIARKYMMSYLKKNPPINEQMLRMMMMQMGMKPSQKKINQMMKAMNNQTK.

Residues 4 to 24 (WVGILVGVVALLIGVALGFFI) form a helical membrane-spanning segment.

It belongs to the UPF0154 family.

It localises to the membrane. This Bacillus subtilis (strain 168) protein is UPF0154 protein YneF (yneF).